The chain runs to 963 residues: Integrator complex subunit 4 (963 aa).

Lys26 carries the post-translational modification N6-acetyllysine. HEAT repeat units lie at residues 66–105 (AESVEGVVRILLEHYYKENDPSVRLKIASLLGLLSKTAGF), 145–183 (QAIQMRLVDVACKHLTDTSHGVRNKCLQLLGNLGSLEKS), 190–228 (GLAARDVQKIIGDYFSDQDPRVRTAAIKAMLQLHERGLK), 229–263 (LHQTIYNQACKLLSDDYEQVRSAAVQLIWVVSQLY), 277–313 (IRLVDDAFGKICHMVSDGSWVVRVQAAKLLGSMEQVS), 369–405 (NLIESGACGAFVHGLEDEMYEVRIAAVEALCMLAQSS), 406–444 (PSFAEKCLDFLVDMFNDEIEEVRLQSIHTMRKISNNITL), and 446–484 (EDQLDTVLAVLEDSSRDIREALHELLCCTNVSTKEGIHL). Lys791 participates in a covalent cross-link: Glycyl lysine isopeptide (Lys-Gly) (interchain with G-Cter in SUMO1); alternate. Lys791 is covalently cross-linked (Glycyl lysine isopeptide (Lys-Gly) (interchain with G-Cter in SUMO2); alternate).

Belongs to the Integrator subunit 4 family. As to quaternary structure, component of the Integrator complex, composed of core subunits INTS1, INTS2, INTS3, INTS4, INTS5, INTS6, INTS7, INTS8, INTS9/RC74, INTS10, INTS11/CPSF3L, INTS12, INTS13, INTS14 and INTS15. The core complex associates with protein phosphatase 2A subunits PPP2CA and PPP2R1A, to form the Integrator-PP2A (INTAC) complex. INTS4 is part of the RNA endonuclease subcomplex, composed of INTS4, INTS9, INTS11 and inositol hexakisphosphate (InsP6). Interacts with BRAT1; interaction is required for the assembly of the RNA endonuclease subcomplex.

Its subcellular location is the nucleus. The protein resides in the cytoplasm. Its function is as follows. Component of the integrator complex, a multiprotein complex that terminates RNA polymerase II (Pol II) transcription in the promoter-proximal region of genes. The integrator complex provides a quality checkpoint during transcription elongation by driving premature transcription termination of transcripts that are unfavorably configured for transcriptional elongation: the complex terminates transcription by (1) catalyzing dephosphorylation of the C-terminal domain (CTD) of Pol II subunit POLR2A/RPB1 and SUPT5H/SPT5, (2) degrading the exiting nascent RNA transcript via endonuclease activity and (3) promoting the release of Pol II from bound DNA. The integrator complex is also involved in terminating the synthesis of non-coding Pol II transcripts, such as enhancer RNAs (eRNAs), small nuclear RNAs (snRNAs), telomerase RNAs and long non-coding RNAs (lncRNAs). Within the integrator complex, INTS4 acts as an scaffold that links INTS9 and INTS11. Mediates recruitment of cytoplasmic dynein to the nuclear envelope, probably as component of the integrator complex. The protein is Integrator complex subunit 4 of Homo sapiens (Human).